We begin with the raw amino-acid sequence, 555 residues long: Hydroxylamine reductase (555 aa).

The [4Fe-4S] cluster site is built by C3, C6, C18, and C25. 8 residues coordinate hybrid [4Fe-2O-2S] cluster: H252, E276, C320, C407, C435, C460, E494, and K496. Cysteine persulfide is present on C407.

This sequence belongs to the HCP family. The cofactor is [4Fe-4S] cluster. Requires hybrid [4Fe-2O-2S] cluster as cofactor.

Its subcellular location is the cytoplasm. It carries out the reaction A + NH4(+) + H2O = hydroxylamine + AH2 + H(+). Its function is as follows. Catalyzes the reduction of hydroxylamine to form NH(3) and H(2)O. The protein is Hydroxylamine reductase of Burkholderia ambifaria (strain MC40-6).